We begin with the raw amino-acid sequence, 250 residues long: 5'-nucleotidase SurE (250 aa).

A divalent metal cation contacts are provided by Asp-8, Asp-9, Ser-39, and Asn-91.

Belongs to the SurE nucleotidase family. The cofactor is a divalent metal cation.

It localises to the cytoplasm. The catalysed reaction is a ribonucleoside 5'-phosphate + H2O = a ribonucleoside + phosphate. In terms of biological role, nucleotidase that shows phosphatase activity on nucleoside 5'-monophosphates. This is 5'-nucleotidase SurE from Leptospira borgpetersenii serovar Hardjo-bovis (strain L550).